A 607-amino-acid polypeptide reads, in one-letter code: Ceramide kinase (607 aa).

The 224-residue stretch at 135-358 (DRPKSLMVFV…LDIAQVVRWK (224 aa)) folds into the DAGKc domain. ATP contacts are provided by residues 145–149 (HPLCG), threonine 176, and 205–211 (GDGLFNE). 204–207 (GGDG) is a substrate binding site. The Proton donor/acceptor role is filled by aspartate 206. A disordered region spans residues 247–297 (NDLSNSELTGDDANAISGSSNTPDDHEPLLSTTRSTGLDISSSDSSDEPCN). Positions 276–286 (LSTTRSTGLDI) are enriched in polar residues. Serine 320 is an ATP binding site. A CXXXCXXC motif is present at residues 454-461 (CRTNCLIC).

Ca(2+) serves as cofactor. Requires Mg(2+) as cofactor. Highly expressed in leaves and at lower levels in stems.

The catalysed reaction is an N-acylsphing-4-enine + ATP = an N-acylsphing-4-enine 1-phosphate + ADP + H(+). Catalyzes specifically the phosphorylation of ceramide to form ceramide 1-phosphate. Possesses activity on ceramide analog (C6 synthetic ceramide) in vitro. Ceramide is a critical sphingolipid metabolite that induces programmed cell death (PCD) in plants and ceramide-1-phosphate has a PCD suppressive effect. Thus, ceramide phosphorylation plays a role in the modulation of PCD and CERK activity is crucial for the maintenance of cell viability. In Oryza sativa subsp. japonica (Rice), this protein is Ceramide kinase (CERK).